We begin with the raw amino-acid sequence, 561 residues long: (+)-alpha-pinene synthase TPS2FN (561 aa).

5 residues coordinate (2E)-geranyl diphosphate: Arg276, Asp313, Asp317, Arg455, and Asp458. Residues Asp313 and Asp317 each contribute to the Mg(2+) site. Positions 313–317 (DDIYD) match the DDXXD motif motif. Positions 458, 462, and 466 each coordinate Mg(2+).

It belongs to the terpene synthase family. Tpsb subfamily. The cofactor is Mg(2+). Mn(2+) is required as a cofactor. In terms of tissue distribution, expressed in glandular trichomes two to four weeks after flowering onset.

It carries out the reaction (2E)-geranyl diphosphate = (1R,5R)-alpha-pinene + diphosphate. The enzyme catalyses (2E)-geranyl diphosphate = (4S)-limonene + diphosphate. The catalysed reaction is (2E)-geranyl diphosphate = sabinene + diphosphate. It catalyses the reaction (2E)-geranyl diphosphate = beta-phellandrene + diphosphate. It carries out the reaction (2E)-geranyl diphosphate = camphene + diphosphate. The enzyme catalyses (2E)-geranyl diphosphate = isoterpinolene + diphosphate. It functions in the pathway secondary metabolite biosynthesis; terpenoid biosynthesis. It participates in terpene metabolism; (-)-alpha-pinene biosynthesis; (-)-alpha-pinene from geranyl diphosphate: step 1/1. Involved in monoterpene (C10) olefins biosynthesis, constituants of cannabinoids and terpenoids-rich resins. Catalyzes mainly the conversion of (2E)-geranyl diphosphate to (+)-alpha-pinene, and also produces minor products such as camphene, sabinene, beta-phellandrene, (-)-limonene and isoterpinolene. The protein is (+)-alpha-pinene synthase TPS2FN of Cannabis sativa (Hemp).